The chain runs to 317 residues: Ribosomal RNA small subunit methyltransferase H (317 aa).

S-adenosyl-L-methionine is bound by residues Ala-37–His-39, Asp-56, Phe-85, Asp-106, and Gln-113.

It belongs to the methyltransferase superfamily. RsmH family.

The protein resides in the cytoplasm. It carries out the reaction cytidine(1402) in 16S rRNA + S-adenosyl-L-methionine = N(4)-methylcytidine(1402) in 16S rRNA + S-adenosyl-L-homocysteine + H(+). Specifically methylates the N4 position of cytidine in position 1402 (C1402) of 16S rRNA. The polypeptide is Ribosomal RNA small subunit methyltransferase H (Lactococcus lactis subsp. lactis (strain IL1403) (Streptococcus lactis)).